The following is a 95-amino-acid chain: Small ribosomal subunit protein bS16 (95 aa).

This sequence belongs to the bacterial ribosomal protein bS16 family.

This chain is Small ribosomal subunit protein bS16, found in Thermotoga maritima (strain ATCC 43589 / DSM 3109 / JCM 10099 / NBRC 100826 / MSB8).